The following is a 286-amino-acid chain: 33 kDa chaperonin (286 aa).

2 disulfides stabilise this stretch: Cys-225–Cys-227 and Cys-258–Cys-261.

This sequence belongs to the HSP33 family. Under oxidizing conditions two disulfide bonds are formed involving the reactive cysteines. Under reducing conditions zinc is bound to the reactive cysteines and the protein is inactive.

It is found in the cytoplasm. In terms of biological role, redox regulated molecular chaperone. Protects both thermally unfolding and oxidatively damaged proteins from irreversible aggregation. Plays an important role in the bacterial defense system toward oxidative stress. The polypeptide is 33 kDa chaperonin (Shewanella sediminis (strain HAW-EB3)).